We begin with the raw amino-acid sequence, 414 residues long: NADH-dependent flavin oxidoreductase iccE (414 aa).

FMN-binding positions include 25–28 (TAIA) and glutamine 107. 188-191 (HASH) is a binding site for substrate. Residue 347-348 (AR) participates in FMN binding.

It belongs to the NADH:flavin oxidoreductase/NADH oxidase family.

It carries out the reaction 8-epi-ilicicolin H = ilicicolin H. It functions in the pathway mycotoxin biosynthesis. In terms of biological role, NADH-dependent flavin oxidoreductase; part of the gene cluster that mediates the biosynthesis of ilicicolin H, a 4-hydroxy-2-pyridonealkaloid that has potent and broad antifungal activities by inhibiting the mitochondrial respiration chain. IccE acts as an epimerase and catalyzes the conversion of 8-epi-ilicicolin H into the final product ilicicolin H. The biosynthesis of ilicicolin H starts with formation of the tetramic acid by the hybrid PKS-NRPS synthetase iccA with the partnering trans-enoyl reductase iccB since iccA lacks a designated enoylreductase (ER) domain. The cytochrome P450 monooxygenase iccC then catalyzes the ring expansion of the tetramate to the acyclic 2-pyridone. The pericyclase iccD further converts the acyclic 2-pyridone into 8-epi-ilicicolin H. Finally, the epimerase iccE converts 8-epi-ilicicolin H into ilicicolin H via epimerization. IccA to iccE are sufficient for ilicicolin H biosynthesis and the roles of the remaining enzymes, iccF, iccG and iccH within the pathway have still to be determined. The protein is NADH-dependent flavin oxidoreductase iccE of Talaromyces variabilis (Penicillium variabile).